The chain runs to 337 residues: Undecaprenyl-phosphate 4-deoxy-4-formamido-L-arabinose transferase (337 aa).

Helical transmembrane passes span Leu-235–Ile-255 and Phe-270–Leu-290.

Belongs to the glycosyltransferase 2 family.

The protein localises to the cell inner membrane. It catalyses the reaction UDP-4-deoxy-4-formamido-beta-L-arabinose + di-trans,octa-cis-undecaprenyl phosphate = 4-deoxy-4-formamido-alpha-L-arabinopyranosyl di-trans,octa-cis-undecaprenyl phosphate + UDP. It functions in the pathway glycolipid biosynthesis; 4-amino-4-deoxy-alpha-L-arabinose undecaprenyl phosphate biosynthesis; 4-amino-4-deoxy-alpha-L-arabinose undecaprenyl phosphate from UDP-4-deoxy-4-formamido-beta-L-arabinose and undecaprenyl phosphate: step 1/2. The protein operates within bacterial outer membrane biogenesis; lipopolysaccharide biosynthesis. Functionally, catalyzes the transfer of 4-deoxy-4-formamido-L-arabinose from UDP to undecaprenyl phosphate. The modified arabinose is attached to lipid A and is required for resistance to polymyxin and cationic antimicrobial peptides. This is Undecaprenyl-phosphate 4-deoxy-4-formamido-L-arabinose transferase from Pseudomonas savastanoi pv. phaseolicola (strain 1448A / Race 6) (Pseudomonas syringae pv. phaseolicola (strain 1448A / Race 6)).